The following is a 345-amino-acid chain: Phenylalanine--tRNA ligase alpha subunit (345 aa).

E253 serves as a coordination point for Mg(2+).

It belongs to the class-II aminoacyl-tRNA synthetase family. Phe-tRNA synthetase alpha subunit type 1 subfamily. Tetramer of two alpha and two beta subunits. Mg(2+) is required as a cofactor.

Its subcellular location is the cytoplasm. It catalyses the reaction tRNA(Phe) + L-phenylalanine + ATP = L-phenylalanyl-tRNA(Phe) + AMP + diphosphate + H(+). The sequence is that of Phenylalanine--tRNA ligase alpha subunit from Nitratidesulfovibrio vulgaris (strain DSM 19637 / Miyazaki F) (Desulfovibrio vulgaris).